The sequence spans 188 residues: Elongation factor P (188 aa).

Belongs to the elongation factor P family.

It is found in the cytoplasm. It participates in protein biosynthesis; polypeptide chain elongation. In terms of biological role, involved in peptide bond synthesis. Stimulates efficient translation and peptide-bond synthesis on native or reconstituted 70S ribosomes in vitro. Probably functions indirectly by altering the affinity of the ribosome for aminoacyl-tRNA, thus increasing their reactivity as acceptors for peptidyl transferase. This Chlorobium phaeobacteroides (strain DSM 266 / SMG 266 / 2430) protein is Elongation factor P.